A 102-amino-acid chain; its full sequence is Large ribosomal subunit protein bL21 (102 aa).

The protein belongs to the bacterial ribosomal protein bL21 family. In terms of assembly, part of the 50S ribosomal subunit. Contacts protein L20.

Functionally, this protein binds to 23S rRNA in the presence of protein L20. The chain is Large ribosomal subunit protein bL21 from Ehrlichia ruminantium (strain Gardel).